A 260-amino-acid chain; its full sequence is Phosphoribosylaminoimidazole-succinocarboxamide synthase (260 aa).

Belongs to the SAICAR synthetase family.

The enzyme catalyses 5-amino-1-(5-phospho-D-ribosyl)imidazole-4-carboxylate + L-aspartate + ATP = (2S)-2-[5-amino-1-(5-phospho-beta-D-ribosyl)imidazole-4-carboxamido]succinate + ADP + phosphate + 2 H(+). It participates in purine metabolism; IMP biosynthesis via de novo pathway; 5-amino-1-(5-phospho-D-ribosyl)imidazole-4-carboxamide from 5-amino-1-(5-phospho-D-ribosyl)imidazole-4-carboxylate: step 1/2. This is Phosphoribosylaminoimidazole-succinocarboxamide synthase from Pelagibacter ubique (strain HTCC1062).